We begin with the raw amino-acid sequence, 313 residues long: Homoserine O-acetyltransferase (313 aa).

Cys142 serves as the catalytic Acyl-thioester intermediate. The substrate site is built by Lys163 and Ser191. Catalysis depends on His234, which acts as the Proton acceptor. Glu236 is a catalytic residue. Arg248 lines the substrate pocket.

This sequence belongs to the MetA family.

Its subcellular location is the cytoplasm. It catalyses the reaction L-homoserine + acetyl-CoA = O-acetyl-L-homoserine + CoA. The protein operates within amino-acid biosynthesis; L-methionine biosynthesis via de novo pathway; O-acetyl-L-homoserine from L-homoserine: step 1/1. In terms of biological role, transfers an acetyl group from acetyl-CoA to L-homoserine, forming acetyl-L-homoserine. This is Homoserine O-acetyltransferase from Streptococcus gordonii (strain Challis / ATCC 35105 / BCRC 15272 / CH1 / DL1 / V288).